We begin with the raw amino-acid sequence, 319 residues long: High mobility group B protein 10 (319 aa).

The segment covering 1–13 (MSTDISPPYSQTH) has biased composition (polar residues). The tract at residues 1–25 (MSTDISPPYSQTHVEPVNGYPSDNK) is disordered. Residues 40–131 (VRNSALFWEK…FLFQLEHVYY (92 aa)) enclose the ARID domain. Over residues 203 to 220 (PSQSQQTMETPSAIVQSS) the composition is skewed to polar residues. Positions 203 to 230 (PSQSQQTMETPSAIVQSSQRRHRKKSKL) are disordered. A DNA-binding region (HMG box) is located at residues 238 to 305 (PKCHRSGYNF…RYRIEMLEYK (68 aa)).

Ubiquitously expressed.

It localises to the nucleus. Its function is as follows. Binds preferentially DNA with A/T-rich content. This Arabidopsis thaliana (Mouse-ear cress) protein is High mobility group B protein 10 (HMGB10).